A 497-amino-acid chain; its full sequence is Peptidoglycan endopeptidase RipA (497 aa).

The signal sequence occupies residues 1-39 (MRRTVRALATRVHGRVCAVPLVVGMLLATALYGGGPAAA). Residues 177-192 (ARLAKEKADQAARDAE) are compositionally biased toward basic and acidic residues. 2 disordered regions span residues 177–198 (ARLAKEKADQAARDAESSQDNA) and 253–297 (APAA…GQNW). Pro residues predominate over residues 255 to 273 (AAAPAPVPNSAPAPVPGAQ). Residues 365-497 (REAVEYVIRR…TPYVTRLIEY (133 aa)) enclose the NlpC/P60 domain. Catalysis depends on Cys408, which acts as the Nucleophile. The active-site Proton acceptor is the His457. Glu469 is a catalytic residue.

Belongs to the peptidase C40 family. As to quaternary structure, monomer.

The protein localises to the secreted. Its function is as follows. Peptidoglycan endopeptidase that cleaves the bond between D-glutamate and meso-diaminopimelate. Binds and degrades high-molecular weight peptidoglycan. Required for normal separation of daughter cells after cell division and for cell wall integrity. The protein is Peptidoglycan endopeptidase RipA (ripA) of Mycolicibacterium smegmatis (strain ATCC 700084 / mc(2)155) (Mycobacterium smegmatis).